The sequence spans 165 residues: Phosphopantetheine adenylyltransferase (165 aa).

Ser-10 serves as a coordination point for substrate. ATP contacts are provided by residues 10–11 (SF) and His-18. The substrate site is built by Lys-42, Thr-79, and Arg-93. Residues 94-96 (GLR), Glu-104, and 129-135 (VRPITAT) each bind ATP.

This sequence belongs to the bacterial CoaD family. Homohexamer. The cofactor is Mg(2+).

The protein localises to the cytoplasm. The enzyme catalyses (R)-4'-phosphopantetheine + ATP + H(+) = 3'-dephospho-CoA + diphosphate. It participates in cofactor biosynthesis; coenzyme A biosynthesis; CoA from (R)-pantothenate: step 4/5. Its function is as follows. Reversibly transfers an adenylyl group from ATP to 4'-phosphopantetheine, yielding dephospho-CoA (dPCoA) and pyrophosphate. The polypeptide is Phosphopantetheine adenylyltransferase (Nitrobacter winogradskyi (strain ATCC 25391 / DSM 10237 / CIP 104748 / NCIMB 11846 / Nb-255)).